We begin with the raw amino-acid sequence, 1388 residues long: ABC transporter G family member 52 (1388 aa).

The tract at residues 1-24 (MDDAGEICSFSRSSSSAREDDEED) is disordered. An ABC transporter 1 domain is found at 135–406 (TNALCITKKI…FKSVGFKCPE (272 aa)). Residue 168–175 (GPPGSGKT) coordinates ATP. One can recognise an ABC transmembrane type-2 1 domain in the interval 484–697 (ELLKANIYRE…ALNALAVNEF (214 aa)). 7 helical membrane-spanning segments follow: residues 503–523 (LYIF…TVFI), 541–561 (ALFY…GPAI), 590–610 (IPIS…VIGF), 621–641 (FLVL…IVAL), 646–666 (VIAS…CGFI), 675–695 (WWIW…LAVN), and 732–752 (ISIG…TICL). The ABC transporter 2 domain maps to 791–1043 (ITFEDIRYSV…ELIKYFEAIQ (253 aa)). 836 to 843 (GVSGAGKT) lines the ATP pocket. An ABC transmembrane type-2 2 domain is found at 1116–1330 (TQWLACLWKQ…TLNGLLTSQF (215 aa)). The next 7 helical transmembrane spans lie at 1136–1156 (IVVR…MFWG), 1167–1183 (LFSI…AMGV), 1223–1243 (FPYI…MVGY), 1250–1270 (FLWY…YGMM), 1280–1300 (MSAV…GFLI), 1305–1325 (IPVW…LNGL), and 1357–1377 (LLWV…FLFG).

The protein belongs to the ABC transporter superfamily. ABCG family. PDR (TC 3.A.1.205) subfamily.

Its subcellular location is the membrane. Its function is as follows. May be a general defense protein. The chain is ABC transporter G family member 52 from Oryza sativa subsp. japonica (Rice).